The primary structure comprises 165 residues: Ribosome maturation factor RimM (165 aa).

The 72-residue stretch at 90 to 161 (EDEYFIVDLV…LITIRPSGEW (72 aa)) folds into the PRC barrel domain.

The protein belongs to the RimM family. In terms of assembly, binds ribosomal protein uS19.

The protein resides in the cytoplasm. Functionally, an accessory protein needed during the final step in the assembly of 30S ribosomal subunit, possibly for assembly of the head region. Essential for efficient processing of 16S rRNA. May be needed both before and after RbfA during the maturation of 16S rRNA. It has affinity for free ribosomal 30S subunits but not for 70S ribosomes. This chain is Ribosome maturation factor RimM, found in Clostridium perfringens (strain SM101 / Type A).